An 877-amino-acid chain; its full sequence is SRP-independent targeting protein 1 (877 aa).

5 positions are modified to phosphoserine: Ser-309, Ser-310, Ser-311, Ser-332, and Ser-334. Disordered stretches follow at residues 369 to 414 (LRKQ…PSND), 446 to 521 (DDYT…DVLS), and 550 to 579 (KPFNQKFPNSQQPDSAGASSPKRSTSSNHF). The segment covering 389–402 (RSQSYSSSNMSRSP) has biased composition (low complexity). Residues 412–441 (SNDELVYDELNNQINEVQDRAKNEEIVLYN) are a coiled coil. Over residues 447 to 462 (DYTKERGEQEQDRTSY) the composition is skewed to basic and acidic residues. Over residues 470–501 (YDDEEGGNEDNYDDDEDDDDDDDDDDESDDEG) the composition is skewed to acidic residues. Polar residues-rich tracts occupy residues 510–521 (LSRSGSSTDVLS) and 551–579 (PFNQKFPNSQQPDSAGASSPKRSTSSNHF). Residues Lys-668 and Lys-670 each participate in a glycyl lysine isopeptide (Lys-Gly) (interchain with G-Cter in ubiquitin) cross-link. 3 positions are modified to phosphoserine: Ser-692, Ser-694, and Ser-706. The interval 773 to 815 (SLPKEREDDNDSTNSTIVPNHPDNDNYNDNDNDNNTGINSNNF) is disordered. The segment covering 805-815 (DNNTGINSNNF) has biased composition (low complexity). The residue at position 841 (Ser-841) is a Phosphoserine.

In terms of assembly, interacts with ENV10/SND2.

The protein resides in the cytoplasm. In terms of biological role, functions in the SND pathway, a SRP (signal recognition particle) and GET (guided entry of tail-anchored proteins) independent pathway for targeting a broad range of substrate proteins to the endoplasmic reticulum. SND functions in parallel to GET in targeting proteins with downstream hydrophobic motifs. This chain is SRP-independent targeting protein 1, found in Saccharomyces cerevisiae (strain ATCC 204508 / S288c) (Baker's yeast).